The following is a 164-amino-acid chain: Peptide deformylase (164 aa).

Fe cation-binding residues include Cys-87 and His-129. Glu-130 is an active-site residue. Position 133 (His-133) interacts with Fe cation.

It belongs to the polypeptide deformylase family. Fe(2+) serves as cofactor.

It carries out the reaction N-terminal N-formyl-L-methionyl-[peptide] + H2O = N-terminal L-methionyl-[peptide] + formate. Its function is as follows. Removes the formyl group from the N-terminal Met of newly synthesized proteins. Requires at least a dipeptide for an efficient rate of reaction. N-terminal L-methionine is a prerequisite for activity but the enzyme has broad specificity at other positions. In Thermotoga neapolitana (strain ATCC 49049 / DSM 4359 / NBRC 107923 / NS-E), this protein is Peptide deformylase.